The sequence spans 265 residues: Di-trans,poly-cis-undecaprenyl-diphosphate synthase (265 aa).

The short motif at 236-238 is the RXG motif; crucial for prenyltransferase activity element; sequence RFG.

Belongs to the UPP synthase family. Mg(2+) is required as a cofactor.

The enzyme catalyses 8 isopentenyl diphosphate + (2E,6E)-farnesyl diphosphate = di-trans,octa-cis-undecaprenyl diphosphate + 8 diphosphate. It functions in the pathway protein modification; protein glycosylation. It participates in lipid metabolism. Cis-prenyl transferase involved in the synthesis of dolichol, a long-chain polyprenol that is utilized as a sugar carrier in protein glycosylation in the endoplasmic reticulum (ER). Catalyzes the sequential condensation of isopentenyl pyrophosphate (IPP) with farnesyl pyrophosphate (FPP) to produce a polyprenyl pyrophosphate which contains 11 (major) and 12 (minor) isoprene units. This is Di-trans,poly-cis-undecaprenyl-diphosphate synthase from Giardia intestinalis (strain ATCC 50803 / WB clone C6) (Giardia lamblia).